The following is a 478-amino-acid chain: UDP-N-acetylmuramate--L-alanine ligase (478 aa).

ATP is bound at residue Gly112–Thr118.

This sequence belongs to the MurCDEF family.

The protein localises to the cytoplasm. The enzyme catalyses UDP-N-acetyl-alpha-D-muramate + L-alanine + ATP = UDP-N-acetyl-alpha-D-muramoyl-L-alanine + ADP + phosphate + H(+). Its pathway is cell wall biogenesis; peptidoglycan biosynthesis. Functionally, cell wall formation. The sequence is that of UDP-N-acetylmuramate--L-alanine ligase from Polaromonas naphthalenivorans (strain CJ2).